An 84-amino-acid polypeptide reads, in one-letter code: Mitochondrial import inner membrane translocase subunit Tim9 (84 aa).

Residues 28-52 (CFMDCVKDFTTREVKPEETTCSESC) carry the Twin CX3C motif motif. 2 disulfides stabilise this stretch: cysteine 28–cysteine 52 and cysteine 32–cysteine 48.

It belongs to the small Tim family. As to quaternary structure, heterohexamer; composed of 3 copies of TIMM9 and 3 copies of TIMM10/TIM10A, named soluble 70 kDa complex. The complex forms a 6-bladed alpha-propeller structure and associates with the TIMM22 component of the TIM22 complex. Interacts with multi-pass transmembrane proteins in transit.

It is found in the mitochondrion inner membrane. Its function is as follows. Mitochondrial intermembrane chaperone that participates in the import and insertion of multi-pass transmembrane proteins into the mitochondrial inner membrane. May also be required for the transfer of beta-barrel precursors from the TOM complex to the sorting and assembly machinery (SAM complex) of the outer membrane. Acts as a chaperone-like protein that protects the hydrophobic precursors from aggregation and guide them through the mitochondrial intermembrane space. In Danio rerio (Zebrafish), this protein is Mitochondrial import inner membrane translocase subunit Tim9 (timm9).